The sequence spans 323 residues: Elongation factor P--(R)-beta-lysine ligase (323 aa).

Position 74 to 76 (74 to 76) interacts with substrate; it reads SPE. Residues 98-100 and N107 each bind ATP; that span reads RNE. Residue Y116 participates in substrate binding. 242–243 contacts ATP; that stretch reads EL. E249 serves as a coordination point for substrate. G298 lines the ATP pocket.

It belongs to the class-II aminoacyl-tRNA synthetase family. EpmA subfamily. As to quaternary structure, homodimer.

It catalyses the reaction D-beta-lysine + L-lysyl-[protein] + ATP = N(6)-((3R)-3,6-diaminohexanoyl)-L-lysyl-[protein] + AMP + diphosphate + H(+). Its function is as follows. With EpmB is involved in the beta-lysylation step of the post-translational modification of translation elongation factor P (EF-P). Catalyzes the ATP-dependent activation of (R)-beta-lysine produced by EpmB, forming a lysyl-adenylate, from which the beta-lysyl moiety is then transferred to the epsilon-amino group of a conserved specific lysine residue in EF-P. The sequence is that of Elongation factor P--(R)-beta-lysine ligase from Vibrio parahaemolyticus serotype O3:K6 (strain RIMD 2210633).